A 250-amino-acid polypeptide reads, in one-letter code: Endonuclease NucS (250 aa).

It belongs to the NucS endonuclease family.

The protein resides in the cytoplasm. Its function is as follows. Cleaves both 3' and 5' ssDNA extremities of branched DNA structures. In Sulfolobus acidocaldarius (strain ATCC 33909 / DSM 639 / JCM 8929 / NBRC 15157 / NCIMB 11770), this protein is Endonuclease NucS.